The primary structure comprises 433 residues: Trigger factor (433 aa).

The PPIase FKBP-type domain occupies 161–246; sequence EDRATIDFTG…LKKVEERELP (86 aa).

The protein belongs to the FKBP-type PPIase family. Tig subfamily.

The protein resides in the cytoplasm. The catalysed reaction is [protein]-peptidylproline (omega=180) = [protein]-peptidylproline (omega=0). Functionally, involved in protein export. Acts as a chaperone by maintaining the newly synthesized protein in an open conformation. Functions as a peptidyl-prolyl cis-trans isomerase. The protein is Trigger factor of Edwardsiella ictaluri (strain 93-146).